Reading from the N-terminus, the 158-residue chain is Small ribosomal subunit protein uS7 (158 aa).

Belongs to the universal ribosomal protein uS7 family. Part of the 30S ribosomal subunit. Contacts proteins S9 and S11.

Its function is as follows. One of the primary rRNA binding proteins, it binds directly to 16S rRNA where it nucleates assembly of the head domain of the 30S subunit. Is located at the subunit interface close to the decoding center, probably blocks exit of the E-site tRNA. This Porphyromonas gingivalis (strain ATCC BAA-308 / W83) protein is Small ribosomal subunit protein uS7.